Consider the following 315-residue polypeptide: Methionyl-tRNA formyltransferase (315 aa).

113–116 contacts (6S)-5,6,7,8-tetrahydrofolate; sequence SILP.

The protein belongs to the Fmt family.

The enzyme catalyses L-methionyl-tRNA(fMet) + (6R)-10-formyltetrahydrofolate = N-formyl-L-methionyl-tRNA(fMet) + (6S)-5,6,7,8-tetrahydrofolate + H(+). Its function is as follows. Attaches a formyl group to the free amino group of methionyl-tRNA(fMet). The formyl group appears to play a dual role in the initiator identity of N-formylmethionyl-tRNA by promoting its recognition by IF2 and preventing the misappropriation of this tRNA by the elongation apparatus. This chain is Methionyl-tRNA formyltransferase, found in Vibrio cholerae serotype O1 (strain M66-2).